The chain runs to 498 residues: ATP synthase subunit alpha 1 (498 aa).

This sequence belongs to the ATPase alpha/beta chains family. F-type ATPases have 2 components, CF(1) - the catalytic core - and CF(0) - the membrane proton channel. CF(1) has five subunits: alpha(3), beta(3), gamma(1), delta(1), epsilon(1). CF(0) has three main subunits: a(1), b(2) and c(9-12). The alpha and beta chains form an alternating ring which encloses part of the gamma chain. CF(1) is attached to CF(0) by a central stalk formed by the gamma and epsilon chains, while a peripheral stalk is formed by the delta and b chains.

The protein resides in the cell membrane. The enzyme catalyses ATP + H2O + 4 H(+)(in) = ADP + phosphate + 5 H(+)(out). Produces ATP from ADP in the presence of a proton gradient across the membrane. The alpha chain is a regulatory subunit. In Listeria monocytogenes serovar 1/2a (strain ATCC BAA-679 / EGD-e), this protein is ATP synthase subunit alpha 1.